The sequence spans 218 residues: Probable nicotinate-nucleotide adenylyltransferase (218 aa).

This sequence belongs to the NadD family.

It catalyses the reaction nicotinate beta-D-ribonucleotide + ATP + H(+) = deamido-NAD(+) + diphosphate. It participates in cofactor biosynthesis; NAD(+) biosynthesis; deamido-NAD(+) from nicotinate D-ribonucleotide: step 1/1. Its function is as follows. Catalyzes the reversible adenylation of nicotinate mononucleotide (NaMN) to nicotinic acid adenine dinucleotide (NaAD). This chain is Probable nicotinate-nucleotide adenylyltransferase, found in Syntrophotalea carbinolica (strain DSM 2380 / NBRC 103641 / GraBd1) (Pelobacter carbinolicus).